The primary structure comprises 1372 residues: MKRIRDDVYASGSQFRRPLGSSRGQLCGQSPVHGSGDTEEEEEGGSRRVSQKLTTNDALSYLREVKEMFQDQREKYDRFLEVMKDFKAQRTDTGGVIARVKELFKGHNNLIYGFNTFLPKGYEITLIEEDDALPKKTVEFEQAINFVNKIKMRFKHDEHVYKSFLEILNMYRKENKEIKEVYNEVSILFQGHLDLLEQFTRFLPASLPSHSAAQHSRSQAQQYSDRGSDPPLLHQMQVEKERRRERAVALRGDYSVERYDLNDDKTMVKIQREQRKRLDKENRARRGRDLDDREAGQDNLHHFPEKRKSSRRAEALEAYSGSASHSEKDNLKSMYKQAFVFCEKVKDRLCSQDDYQTFLKCLNIFSNGIIQRKDLQNLVSDLLGKFPDLMDEFNQFFERCESITDGFQRLAGVMSKKLFSSEEQLSRPMKVEEKESEHKPELEAVKETEQCKKEYMGKSIQELDLSDCECCTPSYRLLPADYPIPIASQRSELGAEVLNDHWVSVTSGSEDYSFKHMRRNQYEESLFRCEDDRFELDMLLESVSSAARSAESLLNIITEKKISFSGSFRIEDHFTALNLRCIERLYGDHGLDVIDILNKNPATALPVILTRLKQKQGEWKKCRDDFDKVWANVYAKNHYKSLDHRSFYFKQQDSKNLSAKSLLAEIKELKEKSQNDDDVLLSISAGYRQPINPNLEYEYLNRAIHEDMFKVVQFSCEELCSTKEQLSKVLRLWENFLEAVLGVPPRAKGTDLVEDVVINPKTLDVNHSTSPNGEAAVSSGGDTARLASRKLKSAANGDENSSSGTFKHGIGLLNKDSTGKENLEDVEIANRDGVACSAVKPQKEQETGNEAEKRFGKPIPMDISERAAISSISIPSGAENNHCVVGKEVLPGAHEIQAKPSDTLTDIHHDVDSIETVHSTQGGDVGNSIVLANGLRSDSSKGTRNSDDPEGPSRNEKEEGELSPNGDFEDNFGVYKDHGVKSTSKPENSAEAEVEADAEVENEDDADDVDSENASEASGTESGGDVCSQDEDREEENGEHDEIDGKAESEGEAEGMDPHLLEGESELLPQSERVLLSVRPLSKHVAAVLCDERTKDLQVFYGNDDFYVLFRLHQILYERILYAKRNCSGGELKSKNLKDTNAGDPYARFMRVLYGLLDGSAENTKFEDECRAIIGNQSYVLFTLDKLIYRLVKQLQAIVADEMDNKLLQLYEYEKSRKPGRVIDSVYYENVRVLVHEENIYRLECSSLPSRLSIQLMDNIIEKPEAYAVSMDPTFASYMQTELLSVSSGKKEEGHDIVLQRNLTGLYDLCKAMEGVEVVNGLECKMSCSSYKIAYVLDTEDYFHRKKKKKKTEQLWQRNKVRVERFHRFLSA.

Positions 1 to 50 are disordered; sequence MKRIRDDVYASGSQFRRPLGSSRGQLCGQSPVHGSGDTEEEEEGGSRRVS. 2 PAH domains span residues 51 to 121 and 136 to 206; these read QKLT…LPKG and KTVE…LPAS. Low complexity predominate over residues 210-222; it reads HSAAQHSRSQAQQ. Disordered stretches follow at residues 210–244 and 272–323; these read HSAA…ERRR and REQR…SGSA. Positions 272–315 are enriched in basic and acidic residues; that stretch reads REQRKRLDKENRARRGRDLDDREAGQDNLHHFPEKRKSSRRAEA. The PAH 3 domain maps to 331 to 400; sequence LKSMYKQAFV…DEFNQFFERC (70 aa). Disordered regions lie at residues 764–783, 791–817, and 934–1056; these read DVNH…GGDT, LKSA…NKDS, and GLRS…AEGM. Over residues 938–957 the composition is skewed to basic and acidic residues; sequence DSSKGTRNSDDPEGPSRNEK. Composition is skewed to acidic residues over residues 990 to 1013 and 1028 to 1042; these read AEAE…DSEN and SQDE…EHDE. Residue Ser1049 is modified to Phosphoserine.

As to quaternary structure, interacts (via PAH3) with ALY2. Interacts (via PAH2) with TBP1. Interacts with ALY3, GATA21, TRP2, TKI1, VAL1, SKP1B, FBX5 and PUB14.

It localises to the nucleus. Its function is as follows. Acts as a transcriptional repressor. A histone deacetylase (HDAC) activity is required for transcription repression. May play a role in telomere stability. The polypeptide is Paired amphipathic helix protein Sin3-like 1 (SNL1) (Arabidopsis thaliana (Mouse-ear cress)).